The sequence spans 128 residues: Ribonuclease pancreatic (128 aa).

Residues 1–15 show a composition bias toward basic and acidic residues; that stretch reads SESSAKKFERQHMDS. The segment at 1–28 is disordered; the sequence is SESSAKKFERQHMDSRGSPSTNPNYCNE. Lys-7 and Arg-10 together coordinate substrate. His-12 (proton acceptor) is an active-site residue. Disulfide bonds link Cys-26/Cys-84, Cys-40/Cys-95, Cys-58/Cys-110, and Cys-65/Cys-72. Asn-34 carries an N-linked (GlcNAc...) asparagine glycan. Substrate contacts are provided by residues 41 to 45, Lys-66, and Arg-85; that span reads KPVNT. His-119 (proton donor) is an active-site residue.

It belongs to the pancreatic ribonuclease family. In terms of assembly, monomer. Interacts with and forms tight 1:1 complexes with RNH1. Dimerization of two such complexes may occur. Interaction with RNH1 inhibits this protein. Pancreas.

It is found in the secreted. It catalyses the reaction an [RNA] containing cytidine + H2O = an [RNA]-3'-cytidine-3'-phosphate + a 5'-hydroxy-ribonucleotide-3'-[RNA].. The enzyme catalyses an [RNA] containing uridine + H2O = an [RNA]-3'-uridine-3'-phosphate + a 5'-hydroxy-ribonucleotide-3'-[RNA].. Endonuclease that catalyzes the cleavage of RNA on the 3' side of pyrimidine nucleotides. Acts on single-stranded and double-stranded RNA. The sequence is that of Ribonuclease pancreatic (RNASE1) from Myocastor coypus (Coypu).